The chain runs to 501 residues: Bifunctional pantoate ligase/cytidylate kinase (501 aa).

The tract at residues M1–S264 is pantoate--beta-alanine ligase. ATP is bound at residue M25–H32. H32 (proton donor) is an active-site residue. (R)-pantoate is bound at residue Q55. Q55 contacts beta-alanine. An ATP-binding site is contributed by G144–D147. Q150 is a (R)-pantoate binding site. Residues V173 and L181–R184 each bind ATP. The tract at residues F265–G501 is cytidylate kinase.

It in the N-terminal section; belongs to the pantothenate synthetase family. In the C-terminal section; belongs to the cytidylate kinase family. Type 1 subfamily.

The protein resides in the cytoplasm. It carries out the reaction (R)-pantoate + beta-alanine + ATP = (R)-pantothenate + AMP + diphosphate + H(+). The catalysed reaction is CMP + ATP = CDP + ADP. It catalyses the reaction dCMP + ATP = dCDP + ADP. The protein operates within cofactor biosynthesis; (R)-pantothenate biosynthesis; (R)-pantothenate from (R)-pantoate and beta-alanine: step 1/1. Catalyzes the condensation of pantoate with beta-alanine in an ATP-dependent reaction via a pantoyl-adenylate intermediate. Its function is as follows. Catalyzes the transfer of a phosphate group from ATP to either CMP or dCMP to form CDP or dCDP and ADP, respectively. The polypeptide is Bifunctional pantoate ligase/cytidylate kinase (Parasynechococcus marenigrum (strain WH8102)).